A 404-amino-acid polypeptide reads, in one-letter code: Alanine racemase (404 aa).

Lysine 34 serves as the catalytic Proton acceptor; specific for D-alanine. Lysine 34 is modified (N6-(pyridoxal phosphate)lysine). Arginine 133 lines the substrate pocket. Positions 226 to 273 constitute an RPE1 insert domain; it reads EVSSNLSYTEEFESNTAALTTTACINKCPDVSVRLTPKLPLKGSYTVR. The active-site Proton acceptor; specific for L-alanine is the tyrosine 298. Substrate is bound at residue methionine 346.

It belongs to the alanine racemase family. The cofactor is pyridoxal 5'-phosphate.

It carries out the reaction L-alanine = D-alanine. It participates in amino-acid biosynthesis; D-alanine biosynthesis; D-alanine from L-alanine: step 1/1. In terms of biological role, catalyzes the interconversion of L-alanine and D-alanine. May also act on other amino acids. The chain is Alanine racemase (alr) from Rickettsia prowazekii (strain Madrid E).